We begin with the raw amino-acid sequence, 127 residues long: Large ribosomal subunit protein bL17 (127 aa).

The protein belongs to the bacterial ribosomal protein bL17 family. Part of the 50S ribosomal subunit. Contacts protein L32.

The chain is Large ribosomal subunit protein bL17 from Legionella pneumophila (strain Corby).